Consider the following 92-residue polypeptide: Small ribosomal subunit protein uS19 (92 aa).

Belongs to the universal ribosomal protein uS19 family.

Functionally, protein S19 forms a complex with S13 that binds strongly to the 16S ribosomal RNA. The chain is Small ribosomal subunit protein uS19 from Rhodopseudomonas palustris (strain HaA2).